A 296-amino-acid polypeptide reads, in one-letter code: Cytidine deaminase (296 aa).

2 CMP/dCMP-type deaminase domains span residues 47–167 (TEAE…FGPK) and 186–296 (DSSD…VDPV). 88 to 90 (NLE) contributes to the substrate binding site. Histidine 101 contacts Zn(2+). Glutamate 103 acts as the Proton donor in catalysis. Zn(2+) contacts are provided by cysteine 128 and cysteine 131.

The protein belongs to the cytidine and deoxycytidylate deaminase family. As to quaternary structure, homodimer. The cofactor is Zn(2+).

The enzyme catalyses cytidine + H2O + H(+) = uridine + NH4(+). It catalyses the reaction 2'-deoxycytidine + H2O + H(+) = 2'-deoxyuridine + NH4(+). This enzyme scavenges exogenous and endogenous cytidine and 2'-deoxycytidine for UMP synthesis. The protein is Cytidine deaminase of Shewanella sp. (strain MR-7).